The sequence spans 454 residues: tRNA modification GTPase MnmE (454 aa).

The (6S)-5-formyl-5,6,7,8-tetrahydrofolate site is built by Arg23, Glu80, and Lys120. Positions 216 to 377 (GMKVVIAGRP…LRNHLKQSMG (162 aa)) constitute a TrmE-type G domain. Asn226 provides a ligand contact to K(+). GTP is bound by residues 226–231 (NAGKSS), 245–251 (TDIAGTT), 270–273 (DTAG), 335–338 (NKAD), and 358–360 (SAR). Ser230 lines the Mg(2+) pocket. Thr245, Ile247, and Thr250 together coordinate K(+). A Mg(2+)-binding site is contributed by Thr251. (6S)-5-formyl-5,6,7,8-tetrahydrofolate is bound at residue Lys454.

The protein belongs to the TRAFAC class TrmE-Era-EngA-EngB-Septin-like GTPase superfamily. TrmE GTPase family. As to quaternary structure, homodimer. Heterotetramer of two MnmE and two MnmG subunits. Requires K(+) as cofactor.

The protein resides in the cytoplasm. Exhibits a very high intrinsic GTPase hydrolysis rate. Involved in the addition of a carboxymethylaminomethyl (cmnm) group at the wobble position (U34) of certain tRNAs, forming tRNA-cmnm(5)s(2)U34. The chain is tRNA modification GTPase MnmE from Salmonella typhi.